Here is a 509-residue protein sequence, read N- to C-terminus: Maturase K (509 aa).

The protein belongs to the intron maturase 2 family. MatK subfamily.

It localises to the plastid. The protein localises to the chloroplast. Functionally, usually encoded in the trnK tRNA gene intron. Probably assists in splicing its own and other chloroplast group II introns. This chain is Maturase K, found in Trifolium semipilosum (Kenya clover).